We begin with the raw amino-acid sequence, 477 residues long: Putative 4-(hydroxymethyl)benzenesulfonate dehydrogenase TsaD2 (477 aa).

NAD(+) is bound by residues 154-155, 178-181, and 230-231; these read WN, KAAE, and GS. Residue E252 is the Proton acceptor of the active site. Position 253 (L253) interacts with NAD(+). C286 functions as the Nucleophile in the catalytic mechanism. E381 contributes to the NAD(+) binding site.

Belongs to the aldehyde dehydrogenase family. As to quaternary structure, homodimer.

The enzyme catalyses 4-(hydroxymethyl)benzenesulfonate + NAD(+) = 4-formylbenzenesulfonate + NADH + H(+). Involved in the toluene-4-sulfonate degradation pathway. Does not discriminate between the sulfonate and the carboxyl substituents and can also be involved in the p-toluenecarboxylate degradation pathway. The sequence is that of Putative 4-(hydroxymethyl)benzenesulfonate dehydrogenase TsaD2 (tsaD2) from Comamonas testosteroni (Pseudomonas testosteroni).